A 155-amino-acid chain; its full sequence is Protein archease-like (155 aa).

The Ca(2+) site is built by aspartate 26, aspartate 154, and isoleucine 155.

Belongs to the archease family.

Functionally, component of the tRNA-splicing ligase complex required to facilitate the enzymatic turnover of catalytic subunit RtcB (F16A11.2). The sequence is that of Protein archease-like from Caenorhabditis elegans.